The primary structure comprises 373 residues: MHVTHLSLADFRSYARVEVPLDPGVTAFVGPNGQGKTNLVEAVGYLATLGSHRVSSDAPLVRMGAERAIIRAQVRQDERRQLVELELNPGKANRARINRSSQVRPRDVLGIVRTVLFAPEDLALIKGDPGERRRFLDELITARSPRMAGVRSDYERVLKQRNTLLKTAALARRHGGRSMDLSTLDVWDQHLARAGAELLAQRLDLIAALQPLADKAYEQLAPGGGPIALEYKPSAPGEAHTRDALYEQLMAALAEARKQEIERGVTLVGPQRDELLLKLGQLPAKGYASHGESWSYALALRLASYDLLRAEGNEPVLVLDDVFAELDTRRRERLAELVAPGEQVLVTAAVDDDVPGVLAGTRYTVSEGTVERV.

30–37 contacts ATP; it reads GPNGQGKT.

It belongs to the RecF family.

The protein resides in the cytoplasm. Its function is as follows. The RecF protein is involved in DNA metabolism; it is required for DNA replication and normal SOS inducibility. RecF binds preferentially to single-stranded, linear DNA. It also seems to bind ATP. The chain is DNA replication and repair protein RecF from Streptomyces avermitilis (strain ATCC 31267 / DSM 46492 / JCM 5070 / NBRC 14893 / NCIMB 12804 / NRRL 8165 / MA-4680).